We begin with the raw amino-acid sequence, 430 residues long: Serine--tRNA ligase (430 aa).

237–239 (TAE) provides a ligand contact to L-serine. ATP is bound at residue 268 to 270 (RSE). Glutamate 291 is an L-serine binding site. 355–358 (EISS) contacts ATP. Serine 391 is an L-serine binding site.

The protein belongs to the class-II aminoacyl-tRNA synthetase family. Type-1 seryl-tRNA synthetase subfamily. In terms of assembly, homodimer. The tRNA molecule binds across the dimer.

Its subcellular location is the cytoplasm. It carries out the reaction tRNA(Ser) + L-serine + ATP = L-seryl-tRNA(Ser) + AMP + diphosphate + H(+). The enzyme catalyses tRNA(Sec) + L-serine + ATP = L-seryl-tRNA(Sec) + AMP + diphosphate + H(+). Its pathway is aminoacyl-tRNA biosynthesis; selenocysteinyl-tRNA(Sec) biosynthesis; L-seryl-tRNA(Sec) from L-serine and tRNA(Sec): step 1/1. Catalyzes the attachment of serine to tRNA(Ser). Is also able to aminoacylate tRNA(Sec) with serine, to form the misacylated tRNA L-seryl-tRNA(Sec), which will be further converted into selenocysteinyl-tRNA(Sec). In Salmonella enteritidis PT4 (strain P125109), this protein is Serine--tRNA ligase.